The following is a 312-amino-acid chain: Taste receptor type 2 member 103 (312 aa).

Residues 1–6 (MVLTIR) are Extracellular-facing. The chain crosses the membrane as a helical span at residues 7-27 (AILWVTLITIISLEFIIGILG). At 28 to 61 (NVFIALVNIIDWVKRGKISAVDKTYMALAISRTA) the chain is on the cytoplasmic side. The helical transmembrane segment at 62–82 (FLLSLITGFLVSLLDPALLGM) threads the bilayer. At 83–92 (RTMVRLLTIS) the chain is on the extracellular side. Residues 93 to 113 (WMVTNHFSVWFATCLSIFYFL) traverse the membrane as a helical segment. Topologically, residues 114–132 (KIANFSNSIFLVLKWEAKK) are cytoplasmic. A helical transmembrane segment spans residues 133–153 (VVSVTLVVSVIILIMNIIVIN). At 154–185 (KFTDRLQVNTLQNCSTSNTLKDYGLFLFISTG) the chain is on the extracellular side. The N-linked (GlcNAc...) asparagine glycan is linked to asparagine 166. Residues 186–206 (FTLTPFAVSLTMFLLLIFSLW) traverse the membrane as a helical segment. Topologically, residues 207–229 (RHLKNMCHSATGSRDVSTVAHIK) are cytoplasmic. A helical membrane pass occupies residues 230–250 (GLQTVVTFLLLYTAFVMSLLS). At 251 to 264 (ESLNINIQHTNLLS) the chain is on the extracellular side. Residues 265–285 (HFLRSIGVAFPTGHSCVLILG) traverse the membrane as a helical segment. The Cytoplasmic segment spans residues 286–312 (NSKLRQASLSVILWLRYKYKHIENWGP).

This sequence belongs to the G-protein coupled receptor T2R family. As to expression, expressed in subsets of taste receptor cells of the tongue and palate epithelium and exclusively in gustducin-positive cells. Expressed in 15% taste bud cells in circumvallate and foliate papillae but only in 2% in fungiform papillae.

The protein localises to the membrane. Its function is as follows. Gustducin-coupled receptor implicated in the perception of bitter compounds in the oral cavity and the gastrointestinal tract. Signals through PLCB2 and the calcium-regulated cation channel TRPM5. The sequence is that of Taste receptor type 2 member 103 (Tas2r103) from Mus musculus (Mouse).